A 372-amino-acid chain; its full sequence is Gustatory and pheromone receptor 39a, isoform B (372 aa).

Residues 1 to 32 (MGTRNRKLLFFLHYQRYLGLTNLDFSKSLHIY) are Cytoplasmic-facing. Residues 33-53 (WLHGTWSSTAIQIVVVGVFMA) form a helical membrane-spanning segment. Over 54–59 (ALLGAL) the chain is Extracellular. A helical membrane pass occupies residues 60–80 (AESLYYMETKSQTGNTFDNAV). The Cytoplasmic segment spans residues 81 to 122 (ILTTSVTQLLANLWLRSQQKSQVNLLQRLSQVVELLQFEPYA). A helical membrane pass occupies residues 123 to 143 (VPQFRWLYRIWLLVCLIYGAM). Residues 144–147 (VTHF) lie on the Extracellular side of the membrane. Residues 148-168 (GINWLTTMQISRVLTLIGFVY) traverse the membrane as a helical segment. Over 169-224 (RCVLANFQFTCYTGMVVILKKLLQVQVKQLEHLVSTTTISMAGVAGCLRTHDEILL) the chain is Cytoplasmic. A helical membrane pass occupies residues 225–245 (LGQRELIAVYGGVILFLFIYQ). The Extracellular portion of the chain corresponds to 246-265 (VMQCILIFYISNLEGFHSSN). The chain crosses the membrane as a helical span at residues 266-286 (DLVLIFCWLAPMLFYLILPLV). Residues 287-348 (VNDIHNQANK…KSTLFKLFTA (62 aa)) are Cytoplasmic-facing. The helical transmembrane segment at 349 to 368 (IFTYMVILVQFKEMENSTKS) threads the bilayer. Position 369 (isoleucine 369) is a topological domain, extracellular.

The protein belongs to the insect chemoreceptor superfamily. Gustatory receptor (GR) family. Gr21a subfamily. Expressed in the adult labellar chemosensory neurons. In larvae, is expressed in neurons of the terminal external chemosensory organ, as well as in the dorsal and posterior pharyngeal sense organs.

Its subcellular location is the cell membrane. Functionally, gustatory receptor which mediates acceptance or avoidance behavior, depending on its substrates. Plays a role in sustaining courtship behavior in males, possibly through the reception of a stimulating arrestant pheromone. This Drosophila melanogaster (Fruit fly) protein is Gustatory and pheromone receptor 39a, isoform B (Gr39a).